We begin with the raw amino-acid sequence, 359 residues long: Archaemetzincin-2 (359 aa).

Zn(2+) is bound at residue H254. The active-site Proton acceptor is the E255. H258, H264, C265, C270, C289, and C292 together coordinate Zn(2+).

It belongs to the peptidase M54 family. Requires Zn(2+) as cofactor.

In terms of biological role, probable zinc metalloprotease. The chain is Archaemetzincin-2 (Amz2) from Rattus norvegicus (Rat).